We begin with the raw amino-acid sequence, 177 residues long: Anti-apoptotic protein NR13 (177 aa).

The BH1 motif lies at 75 to 94; that stretch reads LEAEGGLNWGRLLALVVFTG. A helical membrane pass occupies residues 86-106; the sequence is LLALVVFTGTLAAALAESGCE. Positions 126-141 match the BH2 motif; that stretch reads EWLEEHGGWDGFCRFF. Residues 156-176 traverse the membrane as a helical segment; sequence SNAIMAAAGFGIAGLAFLLVV.

It belongs to the Bcl-2 family. Interacts with BAX. In terms of tissue distribution, expressed preferentially in heart, skeletal muscle, retina, optical tectum and bursa of Fabricius.

Its subcellular location is the cell membrane. Shows anti-apoptotic properties. Counteract the pro-apoptotic activity of BAX. In Gallus gallus (Chicken), this protein is Anti-apoptotic protein NR13 (NR13).